Here is a 252-residue protein sequence, read N- to C-terminus: Phosphate import ATP-binding protein PstB 1 (252 aa).

One can recognise an ABC transporter domain in the interval 6–247 (LQVSDLSVYY…PQHKETEDYI (242 aa)). 38–45 (GPSGSGKS) is a binding site for ATP.

It belongs to the ABC transporter superfamily. Phosphate importer (TC 3.A.1.7) family. In terms of assembly, the complex is composed of two ATP-binding proteins (PstB), two transmembrane proteins (PstC and PstA) and a solute-binding protein (PstS).

It localises to the cell membrane. It catalyses the reaction phosphate(out) + ATP + H2O = ADP + 2 phosphate(in) + H(+). Functionally, part of the ABC transporter complex PstSACB involved in phosphate import. Responsible for energy coupling to the transport system. This chain is Phosphate import ATP-binding protein PstB 1, found in Streptococcus pneumoniae (strain ATCC BAA-255 / R6).